The primary structure comprises 400 residues: Aminomethyltransferase, mitochondrial (400 aa).

Glu-221, Arg-250, and Tyr-397 together coordinate substrate.

The protein belongs to the GcvT family. In terms of assembly, component of the glycine decarboxylase complex (GDC), which is composed of four proteins: P, T, L and H.

Its subcellular location is the mitochondrion. The enzyme catalyses N(6)-[(R)-S(8)-aminomethyldihydrolipoyl]-L-lysyl-[protein] + (6S)-5,6,7,8-tetrahydrofolate = N(6)-[(R)-dihydrolipoyl]-L-lysyl-[protein] + (6R)-5,10-methylene-5,6,7,8-tetrahydrofolate + NH4(+). Functionally, the glycine cleavage system (glycine decarboxylase complex) catalyzes the degradation of glycine. The protein is Aminomethyltransferase, mitochondrial (GCV1) of Saccharomyces cerevisiae (strain ATCC 204508 / S288c) (Baker's yeast).